The following is a 483-amino-acid chain: Arginine/agmatine antiporter (483 aa).

12 helical membrane passes run 11–31, 41–61, 85–105, 124–144, 157–177, 208–228, 239–259, 289–309, 336–356, 364–384, 415–435, and 458–478; these read ILGTLALTGIVISSMIGGGIF, ASAGAVMLAWMLSGIGIFFIA, GFGPYVGFTIAWGYWLCQIFG, YFAGGNTIPAILLGSLLIWIF, FVNIIGAVCTLIPLLLFILIT, STMLVTLWAFIGIEGAVVISG, ATILGFSGCLLIYVLLSLLPF, VLMNTGLLIAVLTSWLSWTIL, PSFSLFMTSGLMQITMLLVYF, MLEITGVMVLPAYLTSSLFLV, LWLIYAGGLQHLFMVAILLAL, and EILKMTIVALAALLAIFLFSA.

The protein belongs to the amino acid-polyamine-organocation (APC) superfamily. Basic amino acid/polyamine antiporter (APA) (TC 2.A.3.2) family.

It localises to the cell inner membrane. In terms of biological role, catalyzes the exchange of L-arginine for agmatine. The arginine uptake by the bacterium in the macrophage may be a virulence factor against the host innate immune response. The polypeptide is Arginine/agmatine antiporter (aaxC) (Chlamydia trachomatis serovar A (strain ATCC VR-571B / DSM 19440 / HAR-13)).